A 152-amino-acid chain; its full sequence is Small ribosomal subunit protein uS15 (152 aa).

The segment covering 1 to 11 (MAKMHTKRKGK) has biased composition (basic residues). Positions 1-24 (MAKMHTKRKGKSSSTRPNRTEPPE) are disordered.

The protein belongs to the universal ribosomal protein uS15 family. As to quaternary structure, part of the 30S ribosomal subunit.

The polypeptide is Small ribosomal subunit protein uS15 (Methanosarcina mazei (strain ATCC BAA-159 / DSM 3647 / Goe1 / Go1 / JCM 11833 / OCM 88) (Methanosarcina frisia)).